A 249-amino-acid chain; its full sequence is Probable transcriptional regulatory protein DICTH_1505 (249 aa).

Belongs to the TACO1 family.

It is found in the cytoplasm. This chain is Probable transcriptional regulatory protein DICTH_1505, found in Dictyoglomus thermophilum (strain ATCC 35947 / DSM 3960 / H-6-12).